Consider the following 444-residue polypeptide: Cop9 signalosome complex subunit 11 (444 aa).

Residues 195–367 (FFTMMTSEPL…IHFEDSSILQ (173 aa)) enclose the PCI domain. The disordered stretch occupies residues 419–439 (SSDDMDIDEVNDRSDISDSEG).

In terms of assembly, component of a COP9 signalosome-like (CSN) complex, composed of RRI1/CSN5, CSN9, RRI2/CSN10, PCI8/CSN11, CSN12 and CSI1. Interacts with PRT1 and RPG1, 2 subunits of the core complex of translation initiation factor 3 (eIF3).

It is found in the cytoplasm. The protein localises to the nucleus. Component of the COP9 signalosome (CSN) complex that acts as an regulator of the ubiquitin (Ubl) conjugation pathway by mediating the deneddylation of the cullin subunit of SCF-type E3 ubiquitin-protein ligase complexes The CSN complex is involved in the regulation of the mating pheromone response. PCI8 may also be involved in transcriptional and translational control. The polypeptide is Cop9 signalosome complex subunit 11 (PCI8) (Saccharomyces cerevisiae (strain ATCC 204508 / S288c) (Baker's yeast)).